The sequence spans 136 residues: Methylglyoxal synthase (136 aa).

The MGS-like domain occupies 1–136; the sequence is MKIALIAHDR…REVVREENEA (136 aa). Residues histidine 8, lysine 12, 34 to 37, and 54 to 55 contribute to the substrate site; these read TGTT and SG. Aspartate 60 serves as the catalytic Proton donor/acceptor. Histidine 87 lines the substrate pocket.

The protein belongs to the methylglyoxal synthase family.

The catalysed reaction is dihydroxyacetone phosphate = methylglyoxal + phosphate. Functionally, catalyzes the formation of methylglyoxal from dihydroxyacetone phosphate. The protein is Methylglyoxal synthase of Brevibacillus brevis (strain 47 / JCM 6285 / NBRC 100599).